The following is a 288-amino-acid chain: NAD kinase (288 aa).

Aspartate 70 serves as the catalytic Proton acceptor. Residues 70-71 (DG), 144-145 (ND), arginine 155, lysine 172, aspartate 174, 185-190 (TGYSLS), and glutamine 245 contribute to the NAD(+) site.

Belongs to the NAD kinase family. A divalent metal cation serves as cofactor.

It localises to the cytoplasm. The catalysed reaction is NAD(+) + ATP = ADP + NADP(+) + H(+). Its function is as follows. Involved in the regulation of the intracellular balance of NAD and NADP, and is a key enzyme in the biosynthesis of NADP. Catalyzes specifically the phosphorylation on 2'-hydroxyl of the adenosine moiety of NAD to yield NADP. The protein is NAD kinase of Geobacter sp. (strain M21).